A 245-amino-acid polypeptide reads, in one-letter code: PF03932 family protein CutC (245 aa).

This sequence belongs to the CutC family.

Its subcellular location is the cytoplasm. The sequence is that of PF03932 family protein CutC from Photobacterium profundum (strain SS9).